Here is a 286-residue protein sequence, read N- to C-terminus: ATP synthase gamma chain (286 aa).

It belongs to the ATPase gamma chain family. F-type ATPases have 2 components, CF(1) - the catalytic core - and CF(0) - the membrane proton channel. CF(1) has five subunits: alpha(3), beta(3), gamma(1), delta(1), epsilon(1). CF(0) has three main subunits: a, b and c.

It localises to the cell inner membrane. Functionally, produces ATP from ADP in the presence of a proton gradient across the membrane. The gamma chain is believed to be important in regulating ATPase activity and the flow of protons through the CF(0) complex. This Shewanella halifaxensis (strain HAW-EB4) protein is ATP synthase gamma chain.